The chain runs to 543 residues: Periplasmic oligopeptide-binding protein OppA (543 aa).

Positions 1–26 (MSNITKKSLIAAGILTALIAASAATA) are cleaved as a signal peptide. An intrachain disulfide couples Cys-297 to Cys-443.

It belongs to the bacterial solute-binding protein 5 family. In terms of assembly, the complex is composed of two ATP-binding proteins (OppD and OppF), two transmembrane proteins (OppB and OppC) and a solute-binding protein (OppA).

Its subcellular location is the periplasm. In terms of biological role, part of the ABC transporter complex OppABCDF involved in the uptake of oligopeptides, including the cell wall murein tripeptide L-alanyl-gamma-D-glutamyl-meso-diaminopimelate. Plays an important nutritional role and is involved in the recycling of cell wall peptides. Binds peptides containing from two to five amino acid residues regardless of their sequence. Also binds cell wall peptides, such as L-alanyl-gamma-D-glutamyl-meso-diaminopimelate. This chain is Periplasmic oligopeptide-binding protein OppA, found in Salmonella typhimurium (strain LT2 / SGSC1412 / ATCC 700720).